Reading from the N-terminus, the 265-residue chain is uncharacterized protein (265 aa).

A divalent metal cation-binding residues include His-7, His-9, Glu-94, His-130, His-155, and Asp-205.

Belongs to the metallo-dependent hydrolases superfamily. TatD-type hydrolase family. A divalent metal cation is required as a cofactor.

This is an uncharacterized protein from Escherichia coli O157:H7.